Reading from the N-terminus, the 256-residue chain is 5-oxoprolinase subunit A (256 aa).

It belongs to the LamB/PxpA family. Forms a complex composed of PxpA, PxpB and PxpC.

The enzyme catalyses 5-oxo-L-proline + ATP + 2 H2O = L-glutamate + ADP + phosphate + H(+). Functionally, catalyzes the cleavage of 5-oxoproline to form L-glutamate coupled to the hydrolysis of ATP to ADP and inorganic phosphate. The chain is 5-oxoprolinase subunit A from Cutibacterium acnes (strain DSM 16379 / KPA171202) (Propionibacterium acnes).